A 382-amino-acid chain; its full sequence is Pregnancy-associated glycoprotein 1 (382 aa).

An N-terminal signal peptide occupies residues 1–15 (MKWLVLLGLVAFSEC). The propeptide at 16–53 (IVKIPLRRVKTMRNTLSGKKMLNSFLKEHAYRLSQISF) is activation peptide. Asn-57 and Asn-74 each carry an N-linked (GlcNAc...) asparagine glycan. One can recognise a Peptidase A1 domain in the interval 71-379 (YVGNITIGTP…DRGNDRIGLA (309 aa)). A disulfide bridge links Cys-102 with Cys-110. N-linked (GlcNAc...) asparagine glycosylation is present at Asn-128. 2 cysteine pairs are disulfide-bonded: Cys-263–Cys-267 and Cys-305–Cys-339.

It belongs to the peptidase A1 family. As to expression, trophoblast and placental tissue. Produced specifically in the invasive binucleate cells of the placenta.

The protein resides in the secreted. It localises to the extracellular space. Its function is as follows. Has no proteolytic activity. The protein is Pregnancy-associated glycoprotein 1 of Ovis aries (Sheep).